A 245-amino-acid polypeptide reads, in one-letter code: DNA polymerase sliding clamp 2 (245 aa).

The protein belongs to the PCNA family. In terms of assembly, homotrimer. The subunits circularize to form a toroid; DNA passes through its center. Replication factor C (RFC) is required to load the toroid on the DNA.

Its function is as follows. Sliding clamp subunit that acts as a moving platform for DNA processing. Responsible for tethering the catalytic subunit of DNA polymerase and other proteins to DNA during high-speed replication. The polypeptide is DNA polymerase sliding clamp 2 (Sulfolobus acidocaldarius (strain ATCC 33909 / DSM 639 / JCM 8929 / NBRC 15157 / NCIMB 11770)).